A 312-amino-acid chain; its full sequence is Homoserine O-acetyltransferase (312 aa).

The active-site Acyl-thioester intermediate is Cys142. 2 residues coordinate substrate: Lys163 and Ser194. Catalysis depends on His237, which acts as the Proton acceptor. Residue Glu239 is part of the active site. Arg251 provides a ligand contact to substrate.

It belongs to the MetA family.

The protein resides in the cytoplasm. It catalyses the reaction L-homoserine + acetyl-CoA = O-acetyl-L-homoserine + CoA. It functions in the pathway amino-acid biosynthesis; L-methionine biosynthesis via de novo pathway; O-acetyl-L-homoserine from L-homoserine: step 1/1. Transfers an acetyl group from acetyl-CoA to L-homoserine, forming acetyl-L-homoserine. This Catenibacterium mitsuokai (strain DSM 15897 / JCM 10609 / CCUG 48821 A / CIP 106738 / RCA14-39) protein is Homoserine O-acetyltransferase.